The sequence spans 330 residues: Inorganic pyrophosphatase 2, mitochondrial (330 aa).

The transit peptide at 1–27 (MRALLPLLSVGRGWRVGAAARPPRRVM) directs the protein to the mitochondrion. Positions 159, 164, and 196 each coordinate Mg(2+). The residue at position 211 (lysine 211) is an N6-succinyllysine. Position 219 is an N6-acetyllysine (lysine 219). The residue at position 254 (lysine 254) is an N6-succinyllysine. An N6-acetyllysine modification is found at lysine 256.

Belongs to the PPase family. As to quaternary structure, homodimer. It depends on Mg(2+) as a cofactor.

The protein resides in the mitochondrion. It carries out the reaction diphosphate + H2O = 2 phosphate + H(+). Its function is as follows. Hydrolyzes inorganic pyrophosphate. This activity is essential for correct regulation of mitochondrial membrane potential, and mitochondrial organization and function. The protein is Inorganic pyrophosphatase 2, mitochondrial (Ppa2) of Mus musculus (Mouse).